A 227-amino-acid polypeptide reads, in one-letter code: Octanoyltransferase (227 aa).

Residues 43–218 (ADSQDELWIV…TFTKTLGYQE (176 aa)) form the BPL/LPL catalytic domain. Residues 82–89 (RGGQVTYH), 149–151 (SLG), and 162–164 (GLA) contribute to the substrate site. Cys-180 serves as the catalytic Acyl-thioester intermediate.

The protein belongs to the LipB family.

Its subcellular location is the cytoplasm. The catalysed reaction is octanoyl-[ACP] + L-lysyl-[protein] = N(6)-octanoyl-L-lysyl-[protein] + holo-[ACP] + H(+). It participates in protein modification; protein lipoylation via endogenous pathway; protein N(6)-(lipoyl)lysine from octanoyl-[acyl-carrier-protein]: step 1/2. Catalyzes the transfer of endogenously produced octanoic acid from octanoyl-acyl-carrier-protein onto the lipoyl domains of lipoate-dependent enzymes. Lipoyl-ACP can also act as a substrate although octanoyl-ACP is likely to be the physiological substrate. The protein is Octanoyltransferase of Shewanella denitrificans (strain OS217 / ATCC BAA-1090 / DSM 15013).